A 294-amino-acid polypeptide reads, in one-letter code: Glycine--tRNA ligase alpha subunit (294 aa).

It belongs to the class-II aminoacyl-tRNA synthetase family. As to quaternary structure, tetramer of two alpha and two beta subunits.

It is found in the cytoplasm. The catalysed reaction is tRNA(Gly) + glycine + ATP = glycyl-tRNA(Gly) + AMP + diphosphate. This is Glycine--tRNA ligase alpha subunit from Nostoc sp. (strain PCC 7120 / SAG 25.82 / UTEX 2576).